An 821-amino-acid chain; its full sequence is Envelope glycoprotein H (821 aa).

An N-terminal signal peptide occupies residues 1–20 (MMCLIIYLSIFLIIVSRMLT). Residues 21–783 (GLPMMDRPDE…TSHEVIVFSS (763 aa)) lie on the Virion surface side of the membrane. N-linked (GlcNAc...) asparagine; by host glycosylation is present at Asn-66. The tract at residues 163 to 186 (QTQPLGHITNPPRRSPKDKPTTSG) is disordered. N-linked (GlcNAc...) asparagine; by host glycosylation is found at Asn-236, Asn-241, Asn-308, Asn-414, Asn-492, Asn-647, Asn-741, and Asn-764. The interaction with gL stretch occupies residues 236–299 (NRTLVNVTIG…SEGPLYKVYV (64 aa)). A helical transmembrane segment spans residues 784–804 (NFIWASIGGVFAACLIIYIII). The Intravirion portion of the chain corresponds to 805–821 (KMLCSFTPDVRYTLLNN).

This sequence belongs to the herpesviridae glycoprotein H family. As to quaternary structure, interacts with glycoprotein L (gL); this interaction is necessary for the correct processing and cell surface expression of gH. The heterodimer gH/gL seems to interact with gB trimers during fusion. Post-translationally, N-glycosylated, O-glycosylated, and sialylated.

Its subcellular location is the virion membrane. The protein resides in the host cell membrane. The protein localises to the host endosome membrane. Functionally, the heterodimer glycoprotein H-glycoprotein L is required for the fusion of viral and plasma membranes leading to virus entry into the host cell. Following initial binding to host receptor, membrane fusion is mediated by the fusion machinery composed of gB and the heterodimer gH/gL. May also be involved in the fusion between the virion envelope and the outer nuclear membrane during virion morphogenesis. This Feline herpesvirus 1 (FeHV-1) protein is Envelope glycoprotein H.